The primary structure comprises 495 residues: Transcription termination/antitermination protein NusA (495 aa).

In terms of domain architecture, S1 motif spans 135–200; it reads GKIVTGTVKK…KTAQLFVTRS (66 aa). One can recognise a KH domain in the interval 302–374; sequence NHSMDIAVEA…LDEEFAQILV (73 aa).

It belongs to the NusA family. As to quaternary structure, monomer. Binds directly to the core enzyme of the DNA-dependent RNA polymerase and to nascent RNA.

It is found in the cytoplasm. Functionally, participates in both transcription termination and antitermination. The polypeptide is Transcription termination/antitermination protein NusA (Haemophilus influenzae (strain ATCC 51907 / DSM 11121 / KW20 / Rd)).